Consider the following 33-residue polypeptide: Dermonecrotic toxin LiSicTox-alphaI-1 (33 aa).

E32 provides a ligand contact to Mg(2+).

Belongs to the arthropod phospholipase D family. Class II subfamily. Requires Mg(2+) as cofactor. Contains 2 disulfide bonds. As to expression, expressed by the venom gland.

Its subcellular location is the secreted. It catalyses the reaction an N-(acyl)-sphingosylphosphocholine = an N-(acyl)-sphingosyl-1,3-cyclic phosphate + choline. The enzyme catalyses an N-(acyl)-sphingosylphosphoethanolamine = an N-(acyl)-sphingosyl-1,3-cyclic phosphate + ethanolamine. The catalysed reaction is a 1-acyl-sn-glycero-3-phosphocholine = a 1-acyl-sn-glycero-2,3-cyclic phosphate + choline. It carries out the reaction a 1-acyl-sn-glycero-3-phosphoethanolamine = a 1-acyl-sn-glycero-2,3-cyclic phosphate + ethanolamine. Its function is as follows. Dermonecrotic toxins cleave the phosphodiester linkage between the phosphate and headgroup of certain phospholipids (sphingolipid and lysolipid substrates), forming an alcohol (often choline) and a cyclic phosphate. This toxin acts on sphingomyelin (SM). It may also act on ceramide phosphoethanolamine (CPE), lysophosphatidylcholine (LPC) and lysophosphatidylethanolamine (LPE), but not on lysophosphatidylserine (LPS), and lysophosphatidylglycerol (LPG). It acts by transphosphatidylation, releasing exclusively cyclic phosphate products as second products. In vivo, intradermal injection induces dermonecrosis. Induces hemolysis, increased vascular permeability, edema, inflammatory response, and platelet aggregation. The protein is Dermonecrotic toxin LiSicTox-alphaI-1 of Loxosceles intermedia (Brown spider).